The following is a 767-amino-acid chain: DNA topoisomerase 1 (767 aa).

Positions M1–K23 are enriched in basic and acidic residues. Positions M1–E201 are disordered. Position 2 is an N-acetylserine (S2). Phosphoserine is present on residues S2 and S10. A compositionally biased stretch (basic residues) spans H24–K39. The span at K40–N110 shows a compositional bias: basic and acidic residues. At S59 the chain carries Phosphoserine. K103 participates in a covalent cross-link: Glycyl lysine isopeptide (Lys-Gly) (interchain with G-Cter in SUMO2). K105 is covalently cross-linked (Glycyl lysine isopeptide (Lys-Gly) (interchain with G-Cter in SUMO); alternate). K105 participates in a covalent cross-link: Glycyl lysine isopeptide (Lys-Gly) (interchain with G-Cter in SUMO2); alternate. The residue at position 114 (S114) is a Phosphoserine. K119 participates in a covalent cross-link: Glycyl lysine isopeptide (Lys-Gly) (interchain with G-Cter in SUMO); alternate. K119 participates in a covalent cross-link: Glycyl lysine isopeptide (Lys-Gly) (interchain with G-Cter in SUMO2); alternate. A Glycyl lysine isopeptide (Lys-Gly) (interchain with G-Cter in SUMO1); alternate cross-link involves residue K119. Over residues P131 to E168 the composition is skewed to basic and acidic residues. Glycyl lysine isopeptide (Lys-Gly) (interchain with G-Cter in SUMO2) cross-links involve residues K136 and K150. K155 is covalently cross-linked (Glycyl lysine isopeptide (Lys-Gly) (interchain with G-Cter in SUMO); alternate). K155 participates in a covalent cross-link: Glycyl lysine isopeptide (Lys-Gly) (interchain with G-Cter in SUMO2); alternate. Glycyl lysine isopeptide (Lys-Gly) (interchain with G-Cter in SUMO2) cross-links involve residues K160 and K166. Residue K174 forms a Glycyl lysine isopeptide (Lys-Gly) (interchain with G-Cter in SUMO2); alternate linkage. Position 174 is an N6-acetyllysine; alternate (K174). Residues K181–E201 show a composition bias toward basic and acidic residues. K206 is covalently cross-linked (Glycyl lysine isopeptide (Lys-Gly) (interchain with G-Cter in SUMO2)). K282 is subject to N6-acetyllysine. K338 is covalently cross-linked (Glycyl lysine isopeptide (Lys-Gly) (interchain with G-Cter in SUMO2)). Interaction with DNA stretches follow at residues K427 to Y428 and R490 to K495. A Topo IB-type catalytic domain is found at S434–F767. S508 carries the phosphoserine; by CK2 modification. A Glycyl lysine isopeptide (Lys-Gly) (interchain with G-Cter in SUMO2) cross-link involves residue K551. The interaction with DNA stretch occupies residues T587 to K589. Residues K644, K702, and K714 each participate in a glycyl lysine isopeptide (Lys-Gly) (interchain with G-Cter in SUMO2) cross-link. Catalysis depends on Y725, which acts as the O-(3'-phospho-DNA)-tyrosine intermediate.

This sequence belongs to the type IB topoisomerase family. As to quaternary structure, monomer. Interacts with ERCC6. Interacts with TPRN; TPRN interacts with a number of DNA damage response proteins, is recruited to sites of DNA damage and may play a role in DNA damage repair. Post-translationally, sumoylated. Lys-119 is the main site of sumoylation. Sumoylation plays a role in partitioning TOP1 between nucleoli and nucleoplasm. Levels are dramatically increased on camptothecin (CPT) treatment. Phosphorylation at Ser-508 by CK2 increases binding to supercoiled DNA and sensitivity to camptothecin.

It is found in the nucleus. Its subcellular location is the nucleolus. The protein localises to the nucleoplasm. The catalysed reaction is ATP-independent breakage of single-stranded DNA, followed by passage and rejoining.. With respect to regulation, specifically inhibited by camptothecin (CPT), a plant alkaloid with antitumor activity. In terms of biological role, releases the supercoiling and torsional tension of DNA introduced during the DNA replication and transcription by transiently cleaving and rejoining one strand of the DNA duplex. Introduces a single-strand break via transesterification at a target site in duplex DNA. The scissile phosphodiester is attacked by the catalytic tyrosine of the enzyme, resulting in the formation of a DNA-(3'-phosphotyrosyl)-enzyme intermediate and the expulsion of a 5'-OH DNA strand. The free DNA strand then rotates around the intact phosphodiester bond on the opposing strand, thus removing DNA supercoils. Finally, in the religation step, the DNA 5'-OH attacks the covalent intermediate to expel the active-site tyrosine and restore the DNA phosphodiester backbone. Regulates the alternative splicing of tissue factor (F3) pre-mRNA in endothelial cells. Involved in the circadian transcription of the core circadian clock component BMAL1 by altering the chromatin structure around the ROR response elements (ROREs) on the BMAL1 promoter. In Cricetulus griseus (Chinese hamster), this protein is DNA topoisomerase 1 (TOP1).